The primary structure comprises 425 residues: Ribonuclease T2-like (425 aa).

The N-terminal stretch at Met-1–Ala-18 is a signal peptide. 5 disulfides stabilise this stretch: Cys-32–Cys-51, Cys-40–Cys-99, Cys-50–Cys-175, Cys-107–Cys-167, and Cys-245–Cys-281. N-linked (GlcNAc...) asparagine glycosylation occurs at Asn-42. Residue His-92 is part of the active site. The N-linked (GlcNAc...) asparagine glycan is linked to Asn-134. Active-site residues include Glu-160 and His-164.

This sequence belongs to the RNase T2 family.

The protein resides in the vacuole lumen. It localises to the cytoplasm. The catalysed reaction is a ribonucleotidyl-ribonucleotide-RNA + H2O = a 3'-end 3'-phospho-ribonucleotide-RNA + a 5'-end dephospho-ribonucleoside-RNA + H(+). Rnase which modulates cell survival under stress conditions. Released from the vacuole to the cytoplasm during stress to promote tRNA and rRNA cleavage and to activate separately a downstream pathway that promotes cell death. Involved in cell size, vacuolar morphology and growth at high temperatures and high salt concentration. This Kluyveromyces lactis (strain ATCC 8585 / CBS 2359 / DSM 70799 / NBRC 1267 / NRRL Y-1140 / WM37) (Yeast) protein is Ribonuclease T2-like (RNY1).